The chain runs to 551 residues: Cytochrome c lysine N-methyltransferase 1 (551 aa).

The region spanning 46–273 (DKIELLRVSS…PNTEVLITYK (228 aa)) is the SET domain. Residues 184–288 (IELLRQIYSA…LAMITKYGFD (105 aa)) are SET-like.

Belongs to the class V-like SAM-binding methyltransferase superfamily.

Its subcellular location is the cytoplasm. It is found in the cytosol. The enzyme catalyses L-lysyl-[cytochrome c] + S-adenosyl-L-methionine = N(6)-methyl-L-lysyl-[cytochrome c] + S-adenosyl-L-homocysteine + H(+). Its function is as follows. Methyltransferase which mediates trimethylation of cytochrome c (CYC1). The chain is Cytochrome c lysine N-methyltransferase 1 (CTM1) from Candida glabrata (strain ATCC 2001 / BCRC 20586 / JCM 3761 / NBRC 0622 / NRRL Y-65 / CBS 138) (Yeast).